The primary structure comprises 290 residues: Small ribosomal subunit biogenesis GTPase RsgA (290 aa).

A CP-type G domain is found at 62–213; sequence KNSLVRPPIV…IADTPGFSSL (152 aa). GTP contacts are provided by residues 111-114 and 156-164; these read SKMD and GQTGVGKST. The Zn(2+) site is built by Cys237, Cys242, His244, and Cys250.

It belongs to the TRAFAC class YlqF/YawG GTPase family. RsgA subfamily. In terms of assembly, monomer. Associates with 30S ribosomal subunit, binds 16S rRNA. The cofactor is Zn(2+).

The protein localises to the cytoplasm. One of several proteins that assist in the late maturation steps of the functional core of the 30S ribosomal subunit. Helps release RbfA from mature subunits. May play a role in the assembly of ribosomal proteins into the subunit. Circularly permuted GTPase that catalyzes slow GTP hydrolysis, GTPase activity is stimulated by the 30S ribosomal subunit. In Streptococcus pyogenes serotype M3 (strain ATCC BAA-595 / MGAS315), this protein is Small ribosomal subunit biogenesis GTPase RsgA.